The primary structure comprises 861 residues: Nuclear cap-binding protein complex subunit 1 (861 aa).

The short motif at 22-30 is the Nuclear localization signal element; the sequence is RMPKRQRIP. One can recognise an MIF4G domain in the interval 36-264; that stretch reads CKEMMPDIRT…LVRVVLPNVK (229 aa).

The protein belongs to the NCBP1 family. Component of the nuclear cap-binding complex (CBC), a heterodimer composed of STO1/CBC1 and CBC2 that interacts with capped RNAs. The complex interacts strongly with the importin subunit alpha SRP1. The SRP1-CBC trimer also binds to capped RNAs, but formation of the importin alpha/beta heterodimer upon binding of KAP95 to SRP1 in the cytoplasm causes dissociation of CBC from the RNA. The CBC complex is part of the commitment complex 1 (CC1), binding to the cap of pre-mRNA and interacting with U1 snRNP subunits MUD2 and SNU56. The CBC complex is part of the NRD1 complex, composed of CBC2, NAB1, NRD1, SEN1 and STO1/CBC2. The CBC complex also interacts with NPL3 and eIF4G (TIF4631 and TIF4632).

The protein localises to the nucleus. It is found in the cytoplasm. Its subcellular location is the perinuclear region. Component of the CBC complex, which binds co-transcriptionally to the 5'-cap of pre-mRNAs and is involved in maturation, export and degradation of nuclear mRNAs. The CBC complex is required for efficient pre-mRNA splicing through efficient commitment complex and spliceosome formation. Together with NPL3, the CBC complex is required for export of mRNAs out of the nucleus. The CBC complex is also involved in nuclear mRNA degradation, probably by directing the mRNAs to the sites of degradation. Affects replication of the positive-strand RNA virus BMV. The protein is Nuclear cap-binding protein complex subunit 1 (STO1) of Saccharomyces cerevisiae (strain ATCC 204508 / S288c) (Baker's yeast).